Reading from the N-terminus, the 333-residue chain is Gap junction alpha-4 protein (333 aa).

Residues 1 to 20 (MGDWGFLEKLLDQVQEHSTV) are Cytoplasmic-facing. The chain crosses the membrane as a helical span at residues 21–40 (VGKIWLTVLFIFRILILGLA). The Extracellular segment spans residues 41-76 (GESVWGDEQSDFECNTAQPGCTNVCYDQAFPISHIR). The chain crosses the membrane as a helical span at residues 77-99 (YWVLQFLFVSTPTLVYLGHVIYL). Residues 100–148 (SRREERLRQKEGELRALPAKDPQVERALAAVERQMAKISVAEDGRLRIR) are Cytoplasmic-facing. The chain crosses the membrane as a helical span at residues 149–165 (GALMGTYVASVLCKSVL). At 166 to 207 (EAGFLYGQWRLYGWTMEPVFVCQRAPCPYLVDCFVSRPTEKT) the chain is on the extracellular side. The chain crosses the membrane as a helical span at residues 208 to 230 (IFIIFMLVVGLISLVLNLLELVH). The Cytoplasmic portion of the chain corresponds to 231 to 333 (LLCRCLSRGM…SSSASKKQYV (103 aa)). Residues 292–333 (ANLTTEERLASSRPPLFLDPPPQNGQKPPSRPSSSASKKQYV) are disordered. Residues 323–333 (PSSSASKKQYV) show a composition bias toward low complexity.

It belongs to the connexin family. Alpha-type (group II) subfamily. In terms of assembly, a connexon is composed of a hexamer of connexins. As to expression, expressed in multiple organs and tissues, including heart, uterus, ovary, and blood vessel endothelium.

Its subcellular location is the cell membrane. It localises to the cell junction. It is found in the gap junction. Functionally, one gap junction consists of a cluster of closely packed pairs of transmembrane channels, the connexons, through which materials of low MW diffuse from one cell to a neighboring cell. The chain is Gap junction alpha-4 protein (GJA4) from Homo sapiens (Human).